The primary structure comprises 274 residues: 2-dehydro-3-deoxyphosphooctonate aldolase (274 aa).

The protein belongs to the KdsA family.

The protein resides in the cytoplasm. It catalyses the reaction D-arabinose 5-phosphate + phosphoenolpyruvate + H2O = 3-deoxy-alpha-D-manno-2-octulosonate-8-phosphate + phosphate. It functions in the pathway carbohydrate biosynthesis; 3-deoxy-D-manno-octulosonate biosynthesis; 3-deoxy-D-manno-octulosonate from D-ribulose 5-phosphate: step 2/3. The protein operates within bacterial outer membrane biogenesis; lipopolysaccharide biosynthesis. This Rickettsia rickettsii (strain Iowa) protein is 2-dehydro-3-deoxyphosphooctonate aldolase.